The chain runs to 192 residues: Ion-translocating oxidoreductase complex subunit A (192 aa).

The next 6 membrane-spanning stretches (helical) occupy residues isoleucine 5 to leucine 25, isoleucine 39 to valine 59, leucine 67 to phenylalanine 87, leucine 102 to leucine 122, isoleucine 134 to methionine 154, and serine 171 to valine 191.

This sequence belongs to the NqrDE/RnfAE family. As to quaternary structure, the complex is composed of six subunits: RnfA, RnfB, RnfC, RnfD, RnfE and RnfG.

It is found in the cell inner membrane. Functionally, part of a membrane-bound complex that couples electron transfer with translocation of ions across the membrane. The polypeptide is Ion-translocating oxidoreductase complex subunit A (Vibrio campbellii (strain ATCC BAA-1116)).